Reading from the N-terminus, the 246-residue chain is tRNA (guanine-N(1)-)-methyltransferase (246 aa).

An S-adenosyl-L-methionine-binding site is contributed by glycine 114.

This sequence belongs to the RNA methyltransferase TrmD family. As to quaternary structure, homodimer.

The protein localises to the cytoplasm. The catalysed reaction is guanosine(37) in tRNA + S-adenosyl-L-methionine = N(1)-methylguanosine(37) in tRNA + S-adenosyl-L-homocysteine + H(+). Functionally, specifically methylates guanosine-37 in various tRNAs. This Novosphingobium aromaticivorans (strain ATCC 700278 / DSM 12444 / CCUG 56034 / CIP 105152 / NBRC 16084 / F199) protein is tRNA (guanine-N(1)-)-methyltransferase.